We begin with the raw amino-acid sequence, 423 residues long: Testin (423 aa).

Disordered stretches follow at residues 1 to 21 (MSAT…ACAS) and 138 to 169 (EKQP…PSKC). A PET domain is found at 97–204 (MILTNPVAAK…GDVKFPSEMN (108 aa)). Over residues 160–169 (PAHDQDPSKC) the composition is skewed to basic and acidic residues. 3 consecutive LIM zinc-binding domains span residues 236 to 299 (YSCY…CDSE), 301 to 361 (PRCA…NHAV), and 364 to 423 (QGCH…RMMS).

It belongs to the prickle / espinas / testin family. Interacts via LIM domain 1 with ZYX. Interacts (via LIM domain 3) with ENAH and VASP. Interacts with ALKBH4, talin, actin, alpha-actinin, GRIP1 and PXN. Interacts (via LIM domain 2) with ACTL7A (via N-terminus). Heterodimer with ACTL7A; the heterodimer interacts with ENAH to form a heterotrimer. Detected at the acrosome of round spermatids (at protein level). Isoform TES1 transcript is highly expressed in adult testis and detected at low levels in other tissues. Isoform TES2 transcript is highly expressed in testis, kidney and spleen; intermediate in thymus, submaxillary gland and lung; detected at low levels in other tissues.

The protein localises to the cytoplasm. Its subcellular location is the cell junction. The protein resides in the focal adhesion. Functionally, scaffold protein that may play a role in cell adhesion, cell spreading and in the reorganization of the actin cytoskeleton. Plays a role in the regulation of cell proliferation. May act as a tumor suppressor. This chain is Testin (Tes), found in Mus musculus (Mouse).